Consider the following 379-residue polypeptide: Chaperone protein DnaJ (379 aa).

The J domain maps to 5-70 (DYYEVLGVSR…QKRAAYDQYG (66 aa)). Residues 134–212 (GVTKEIRIPT…CHGHGRVEKS (79 aa)) form a CR-type zinc finger. Residues cysteine 147, cysteine 150, cysteine 164, cysteine 167, cysteine 186, cysteine 189, cysteine 200, and cysteine 203 each coordinate Zn(2+). CXXCXGXG motif repeat units follow at residues 147-154 (CDVCHGSG), 164-171 (CPTCHGAG), 186-193 (CPHCHGRG), and 200-207 (CNKCHGHG).

Belongs to the DnaJ family. In terms of assembly, homodimer. It depends on Zn(2+) as a cofactor.

It is found in the cytoplasm. Functionally, participates actively in the response to hyperosmotic and heat shock by preventing the aggregation of stress-denatured proteins and by disaggregating proteins, also in an autonomous, DnaK-independent fashion. Unfolded proteins bind initially to DnaJ; upon interaction with the DnaJ-bound protein, DnaK hydrolyzes its bound ATP, resulting in the formation of a stable complex. GrpE releases ADP from DnaK; ATP binding to DnaK triggers the release of the substrate protein, thus completing the reaction cycle. Several rounds of ATP-dependent interactions between DnaJ, DnaK and GrpE are required for fully efficient folding. Also involved, together with DnaK and GrpE, in the DNA replication of plasmids through activation of initiation proteins. This chain is Chaperone protein DnaJ, found in Yersinia pestis bv. Antiqua (strain Antiqua).